A 296-amino-acid polypeptide reads, in one-letter code: 4-hydroxy-tetrahydrodipicolinate synthase (296 aa).

Threonine 49 provides a ligand contact to pyruvate. Residue tyrosine 137 is the Proton donor/acceptor of the active site. Lysine 166 (schiff-base intermediate with substrate) is an active-site residue. Position 208 (valine 208) interacts with pyruvate.

Belongs to the DapA family. As to quaternary structure, homotetramer; dimer of dimers.

The protein resides in the cytoplasm. The enzyme catalyses L-aspartate 4-semialdehyde + pyruvate = (2S,4S)-4-hydroxy-2,3,4,5-tetrahydrodipicolinate + H2O + H(+). The protein operates within amino-acid biosynthesis; L-lysine biosynthesis via DAP pathway; (S)-tetrahydrodipicolinate from L-aspartate: step 3/4. Its function is as follows. Catalyzes the condensation of (S)-aspartate-beta-semialdehyde [(S)-ASA] and pyruvate to 4-hydroxy-tetrahydrodipicolinate (HTPA). The chain is 4-hydroxy-tetrahydrodipicolinate synthase from Desulforamulus reducens (strain ATCC BAA-1160 / DSM 100696 / MI-1) (Desulfotomaculum reducens).